The sequence spans 3912 residues: Ubiquitin carboxyl-terminal hydrolase puf (3912 aa).

5 disordered regions span residues 101–172, 518–590, 660–688, 851–878, and 1491–1611; these read AQQQ…HKSH, NVTA…ISPE, DVPS…ECSD, VVSG…VQPS, and SRRG…PALS. The segment covering 106–133 has biased composition (basic and acidic residues); it reads EQQRDEASAQAEAKESSAPAEEPKKEEP. The span at 134-143 shows a compositional bias: low complexity; it reads SGSAGEEAQG. A compositionally biased stretch (pro residues) spans 150-164; it reads KKPPVGPCTPPPPQT. Positions 522-532 are enriched in low complexity; that stretch reads SSSDSGSIEGS. A compositionally biased stretch (basic and acidic residues) spans 576–585; that stretch reads ICDPTTEKGK. A compositionally biased stretch (acidic residues) spans 660–687; it reads DVPSSDEADGEADGDGEGELLADSDECS. A compositionally biased stretch (polar residues) spans 862-876; the sequence is KASQGSSTSGSTPVQ. A compositionally biased stretch (basic residues) spans 1511–1520; sequence VKKSSMGRRR. The segment covering 1550-1567 has biased composition (polar residues); sequence TPSTGLQDVETEASSSSG. Basic and acidic residues predominate over residues 1583–1594; that stretch reads KGETFEQEKERP. Over residues 1600 to 1609 the composition is skewed to pro residues; that stretch reads PPSPTPPPPA. The region spanning 2015-2380 is the USP domain; sequence VGLTNLGATC…SAYMLFYERR (366 aa). Catalysis depends on C2024, which acts as the Nucleophile. A compositionally biased stretch (basic and acidic residues) spans 2249–2263; that stretch reads YKEERERRQKEKEGA. The interval 2249-2274 is disordered; it reads YKEERERRQKEKEGADGSGDGNDNEK. The Proton acceptor role is filled by H2305. 4 disordered regions span residues 2391–2529, 3322–3344, 3657–3776, and 3800–3912; these read ELLV…TSKA, QQSQ…LQQQ, SERF…EERE, and ASVP…PTQI. 2 stretches are compositionally biased toward basic and acidic residues: residues 2402–2413 and 2433–2488; these read VEEKSEAEEPTK and EKDK…EKPT. The segment covering 2504–2523 has biased composition (low complexity); the sequence is NCDNHQQNNNSNSKASNDQQ. Residues 3657-3703 are compositionally biased toward basic and acidic residues; that stretch reads SERFRKESERDPFPNKKQKRDSQKIKEKEHPQPESEKETSTENDKPS. Polar residues predominate over residues 3706–3721; the sequence is SMESSGNAEQATDSTK. Over residues 3741-3751 the composition is skewed to acidic residues; sequence SDDETELEDEL. The segment covering 3766–3776 has biased composition (basic and acidic residues); it reads TAQDRVNEERE. The span at 3865 to 3877 shows a compositional bias: polar residues; it reads PKTSQTNGSQQNE. Low complexity predominate over residues 3878–3912; sequence SPPAATSADTAPANPSPAPAAAVASTSQAASPTQI.

This sequence belongs to the peptidase C19 family. As to quaternary structure, interacts with Myc and ago.

Its subcellular location is the nucleus. The enzyme catalyses Thiol-dependent hydrolysis of ester, thioester, amide, peptide and isopeptide bonds formed by the C-terminal Gly of ubiquitin (a 76-residue protein attached to proteins as an intracellular targeting signal).. In terms of biological role, ubiquitin hydrolase that can remove conjugated ubiquitin from target proteins and polyubiquitin chains. Essential for Myc-mediated cell growth and proliferation in developing eyes and wings. In the wing and eye, the deubiquitinating activity acts as an antagonist to the SCF E3 ubiquitin-protein ligase member archipelago (ago) to regulate Myc and CycE stability and thus control cell growth and proliferation. Also appears to regulate ago by modulating its induction by Myc. May also promote cell apoptosis in the wing imaginal disk, acting in an apoptotic pathway that appears to be largely independent of Myc. Required for preventing the activation of the immune deficiency (Imd) and Toll signaling cascades under unchallenged conditions. Also appears to be involved in modulating the differential expression of certain antimicrobial peptides (AMP) in response to infection by either Gram-positive or Gram-negative bacteria. Involved in the regulation of DNA damage repair pathways, including euchromatic site-specific double strand break (DSB) repair. The sequence is that of Ubiquitin carboxyl-terminal hydrolase puf from Drosophila melanogaster (Fruit fly).